The primary structure comprises 344 residues: 2,3,4,5-tetrahydropyridine-2,6-dicarboxylate N-succinyltransferase (344 aa).

Mg(2+) is bound at residue Glu-205. Glu-221 functions as the Acyl-anhydride intermediate in the catalytic mechanism. Succinyl-CoA is bound by residues Arg-223, Gly-238, Ser-241, Ala-264, 279-280 (EA), 287-289 (GTK), Lys-304, and 317-320 (RRNS).

Belongs to the type 2 tetrahydrodipicolinate N-succinyltransferase family. As to quaternary structure, homotrimer. Magnesium ions are not essential for catalysis. is required as a cofactor.

The protein localises to the cytoplasm. The catalysed reaction is (S)-2,3,4,5-tetrahydrodipicolinate + succinyl-CoA + H2O = (S)-2-succinylamino-6-oxoheptanedioate + CoA. It functions in the pathway amino-acid biosynthesis; L-lysine biosynthesis via DAP pathway; LL-2,6-diaminopimelate from (S)-tetrahydrodipicolinate (succinylase route): step 1/3. Its activity is regulated as follows. Weakly inhibited by D-2-aminopimelate. Its function is as follows. Catalyzes the conversion of the cyclic tetrahydrodipicolinate (THDP) into the acyclic N-succinyl-L-2-amino-6-oxopimelate using succinyl-CoA. Displays succinyl transferase activity with L-2-aminopimelate and succinyl-CoA as substrates. This is 2,3,4,5-tetrahydropyridine-2,6-dicarboxylate N-succinyltransferase from Pseudomonas aeruginosa (strain ATCC 15692 / DSM 22644 / CIP 104116 / JCM 14847 / LMG 12228 / 1C / PRS 101 / PAO1).